Consider the following 513-residue polypeptide: DNA damage response protein kinase DUN1 (513 aa).

Over residues methionine 1–aspartate 12 the composition is skewed to basic and acidic residues. The segment at methionine 1–serine 29 is disordered. Serine 10 carries the phosphoserine modification. Positions threonine 56 to leucine 112 constitute an FHA domain. The residue at position 139 (serine 139) is a Phosphoserine. In terms of domain architecture, Protein kinase spans tyrosine 200–phenylalanine 480. Residues leucine 206–valine 214 and lysine 229 each bind ATP. Residue aspartate 328 is the Proton acceptor of the active site. Residue threonine 380 is modified to Phosphothreonine.

Belongs to the protein kinase superfamily. CAMK Ser/Thr protein kinase family. CHEK2 subfamily. As to quaternary structure, interacts with the PAB-dependent poly(A)-nuclease (PAN) complex regulatory subunit PAN3 via its forkhead-associated (FHA) domain. Autophosphorylation increases in response to DNA damage.

The protein resides in the nucleus. The enzyme catalyses L-seryl-[protein] + ATP = O-phospho-L-seryl-[protein] + ADP + H(+). The catalysed reaction is L-threonyl-[protein] + ATP = O-phospho-L-threonyl-[protein] + ADP + H(+). Functionally, transducer of the DNA damage signal. Phosphorylates SML1 on serine residues. Cooperates with the PAN deadenylation complex in the regulation of RAD5 mRNA levels and cell survival in response to replicational stress. The protein is DNA damage response protein kinase DUN1 (DUN1) of Saccharomyces cerevisiae (strain ATCC 204508 / S288c) (Baker's yeast).